The following is a 452-amino-acid chain: tRNA modification GTPase MnmE (452 aa).

(6S)-5-formyl-5,6,7,8-tetrahydrofolate-binding residues include Arg-24, Glu-81, and Lys-120. The TrmE-type G domain occupies 217–373 (GIKTAIVGKT…LIMKIEQMHI (157 aa)). Asn-227 serves as a coordination point for K(+). GTP contacts are provided by residues 227–232 (NVGKSS), 246–252 (TDIHGTT), and 271–274 (DTAG). Ser-231 lines the Mg(2+) pocket. Residues Thr-246, Ile-248, and Thr-251 each coordinate K(+). Thr-252 is a binding site for Mg(2+). Lys-452 contributes to the (6S)-5-formyl-5,6,7,8-tetrahydrofolate binding site.

It belongs to the TRAFAC class TrmE-Era-EngA-EngB-Septin-like GTPase superfamily. TrmE GTPase family. As to quaternary structure, homodimer. Heterotetramer of two MnmE and two MnmG subunits. It depends on K(+) as a cofactor.

Its subcellular location is the cytoplasm. In terms of biological role, exhibits a very high intrinsic GTPase hydrolysis rate. Involved in the addition of a carboxymethylaminomethyl (cmnm) group at the wobble position (U34) of certain tRNAs, forming tRNA-cmnm(5)s(2)U34. This is tRNA modification GTPase MnmE from Mesoplasma florum (strain ATCC 33453 / NBRC 100688 / NCTC 11704 / L1) (Acholeplasma florum).